Reading from the N-terminus, the 443-residue chain is Phosphoglucosamine mutase (443 aa).

Ser-101 acts as the Phosphoserine intermediate in catalysis. Mg(2+) contacts are provided by Ser-101, Asp-239, Asp-241, and Asp-243. A Phosphoserine modification is found at Ser-101.

The protein belongs to the phosphohexose mutase family. The cofactor is Mg(2+). In terms of processing, activated by phosphorylation.

It catalyses the reaction alpha-D-glucosamine 1-phosphate = D-glucosamine 6-phosphate. Its function is as follows. Catalyzes the conversion of glucosamine-6-phosphate to glucosamine-1-phosphate. This chain is Phosphoglucosamine mutase, found in Francisella tularensis subsp. tularensis (strain FSC 198).